The following is a 188-amino-acid chain: dCTP deaminase (188 aa).

Residues 111–116 (KSTYAR), 135–137 (TLE), glutamine 156, tyrosine 170, and glutamine 180 contribute to the dCTP site. Glutamate 137 (proton donor/acceptor) is an active-site residue.

The protein belongs to the dCTP deaminase family. In terms of assembly, homotrimer.

The catalysed reaction is dCTP + H2O + H(+) = dUTP + NH4(+). It participates in pyrimidine metabolism; dUMP biosynthesis; dUMP from dCTP (dUTP route): step 1/2. Catalyzes the deamination of dCTP to dUTP. This chain is dCTP deaminase, found in Dechloromonas aromatica (strain RCB).